Consider the following 467-residue polypeptide: Chromosomal replication initiator protein DnaA (467 aa).

The segment at 1–85 is domain I, interacts with DnaA modulators; the sequence is MTTTLWPQVL…LEVGEYAIES (85 aa). The domain II stretch occupies residues 85 to 130; sequence SFNEPENTSVPQPLRETKAEREAAEKAASSTSKKKSDSPPKKTIKH. The segment at 87 to 129 is disordered; that stretch reads NEPENTSVPQPLRETKAEREAAEKAASSTSKKKSDSPPKKTIK. A compositionally biased stretch (basic and acidic residues) spans 99 to 109; the sequence is RETKAEREAAE. The domain III, AAA+ region stretch occupies residues 131 to 347; that stretch reads NLNTNFTFDT…GALKRVGAFA (217 aa). Residues Gly-175, Gly-177, Lys-178, and Thr-179 each coordinate ATP. The tract at residues 348–467 is domain IV, binds dsDNA; that stretch reads QFTQQLVTVD…FNSLIRIITN (120 aa).

It belongs to the DnaA family. In terms of assembly, oligomerizes as a right-handed, spiral filament on DNA at oriC.

The protein localises to the cytoplasm. Plays an essential role in the initiation and regulation of chromosomal replication. ATP-DnaA binds to the origin of replication (oriC) to initiate formation of the DNA replication initiation complex once per cell cycle. Binds the DnaA box (a 9 base pair repeat at the origin) and separates the double-stranded (ds)DNA. Forms a right-handed helical filament on oriC DNA; dsDNA binds to the exterior of the filament while single-stranded (ss)DNA is stabiized in the filament's interior. The ATP-DnaA-oriC complex binds and stabilizes one strand of the AT-rich DNA unwinding element (DUE), permitting loading of DNA polymerase. After initiation quickly degrades to an ADP-DnaA complex that is not apt for DNA replication. Binds acidic phospholipids. The chain is Chromosomal replication initiator protein DnaA from Hydrogenovibrio crunogenus (strain DSM 25203 / XCL-2) (Thiomicrospira crunogena).